The following is a 590-amino-acid chain: Glutathione S-transferase T3 (590 aa).

The GST N-terminal domain occupies 1–82; the sequence is MKLKVYADRM…YLSSAYPSVV (82 aa). Glutathione-binding positions include 11–12, 40–41, 53–54, and 66–67; these read SQ, QL, KV, and ES. Residues 89–232 form the GST C-terminal domain; sequence DLSKRARIHS…KDRCQKQREM (144 aa). The Myb-like domain maps to 265 to 336; that stretch reads DRRKHRRKWS…HCKQRWSKLN (72 aa). Positions 402–427 are disordered; it reads SKGGGSSKRTKLNNGDRVYSSSSNPE.

It belongs to the GST superfamily. Theta family.

The protein resides in the nucleus. It carries out the reaction RX + glutathione = an S-substituted glutathione + a halide anion + H(+). Its function is as follows. May be involved in the conjugation of reduced glutathione to a wide number of exogenous and endogenous hydrophobic electrophiles and have a detoxification role against certain herbicides. The chain is Glutathione S-transferase T3 (GSTT3) from Arabidopsis thaliana (Mouse-ear cress).